The primary structure comprises 136 residues: Pilotin AspS 2 (136 aa).

An N-terminal signal peptide occupies residues 1 to 24 (MSIKQMPGRVLISLLLSVTGLLSG). Cys-25 carries the N-palmitoyl cysteine lipid modification. A lipid anchor (S-diacylglycerol cysteine) is attached at Cys-25. A disulfide bridge connects residues Cys-94 and Cys-131.

The protein belongs to the GspS/AspS pilotin family. Cryo-electron microscopy shows that the complex forms a cylindrical channel with 15 GspD2 subunits, each of which interacts with its surrounding AspS2 (GspS-beta).

Its subcellular location is the cell outer membrane. Its function is as follows. Part of a type II secretion system (T2SS, formerly general secretion pathway, GSP) for the export of folded proteins across the outer membrane. Required for correct assembly of the type II secretion system-beta (T2SS-beta), for localization of GspD-beta to the cell outer membrane and for export of a labile enterotoxin by T2SS-beta. Each AspS2 binds to 2 GspD2 subunits and may clamp the monomers together, stabilizing structure and accelerating its assembly. The polypeptide is Pilotin AspS 2 (Escherichia coli O78:H11 (strain H10407 / ETEC)).